A 169-amino-acid polypeptide reads, in one-letter code: Sorting nexin-24 (169 aa).

An N-acetylmethionine modification is found at M1. A PX domain is found at 1–125; sequence MEVYIPSFRY…SFDETESEES (125 aa). Residues R38, S40, K61, and R74 each contribute to the a 1,2-diacyl-sn-glycero-3-phospho-(1D-myo-inositol-3-phosphate) site. S113 and S116 each carry phosphoserine.

It belongs to the sorting nexin family.

It localises to the cytoplasmic vesicle membrane. In terms of biological role, may be involved in several stages of intracellular trafficking. The chain is Sorting nexin-24 (SNX24) from Homo sapiens (Human).